We begin with the raw amino-acid sequence, 227 residues long: Fibrillarin-like rRNA/tRNA 2'-O-methyltransferase (227 aa).

S-adenosyl-L-methionine is bound by residues Thr-86–Thr-87, Glu-105–Phe-106, Asp-130–Ala-131, and Asp-150–Gln-153.

This sequence belongs to the methyltransferase superfamily. Fibrillarin family. Interacts with nop5. Component of box C/D small ribonucleoprotein (sRNP) particles that contain rpl7ae, FlpA and nop5, plus a guide RNA.

Its function is as follows. Involved in pre-rRNA and tRNA processing. Utilizes the methyl donor S-adenosyl-L-methionine to catalyze the site-specific 2'-hydroxyl methylation of ribose moieties in rRNA and tRNA. Site specificity is provided by a guide RNA that base pairs with the substrate. Methylation occurs at a characteristic distance from the sequence involved in base pairing with the guide RNA. The polypeptide is Fibrillarin-like rRNA/tRNA 2'-O-methyltransferase (Pyrococcus horikoshii (strain ATCC 700860 / DSM 12428 / JCM 9974 / NBRC 100139 / OT-3)).